We begin with the raw amino-acid sequence, 139 residues long: HTH-type transcriptional repressor Mb2911 (139 aa).

Residues Asp-6 to Ser-138 form the HTH marR-type domain.

In terms of assembly, homodimer.

In terms of biological role, represses expression of the HQNO methyltransferase htm gene by binding to its promoter region. In Mycobacterium bovis (strain ATCC BAA-935 / AF2122/97), this protein is HTH-type transcriptional repressor Mb2911.